The sequence spans 647 residues: Threonine--tRNA ligase (647 aa).

The region spanning 1 to 61 (MIKITFPDGA…EEDGSIEIVT (61 aa)) is the TGS domain. The catalytic stretch occupies residues 240-538 (DHRKLGKELD…LIETYKGAFP (299 aa)). Cys334, His385, and His515 together coordinate Zn(2+).

The protein belongs to the class-II aminoacyl-tRNA synthetase family. Homodimer. Zn(2+) is required as a cofactor.

The protein resides in the cytoplasm. The catalysed reaction is tRNA(Thr) + L-threonine + ATP = L-threonyl-tRNA(Thr) + AMP + diphosphate + H(+). In terms of biological role, catalyzes the attachment of threonine to tRNA(Thr) in a two-step reaction: L-threonine is first activated by ATP to form Thr-AMP and then transferred to the acceptor end of tRNA(Thr). Also edits incorrectly charged L-seryl-tRNA(Thr). The protein is Threonine--tRNA ligase of Streptococcus agalactiae serotype V (strain ATCC BAA-611 / 2603 V/R).